A 126-amino-acid chain; its full sequence is Scygonadin (126 aa).

An N-terminal signal peptide occupies residues 1-24; it reads MRSSLLLGLTVVVLLGVIVPPCMA.

Expressed in the ejaculatory ducts of mature males. Not detected in the ejaculatory ducts of immature males. Not detected in hepatopancreas, female reproductive tract, eyes, exoskeleton, subcuticular epithelia, heart, gills, stomach, muscle and hemocytes.

The protein localises to the secreted. Functionally, has antibacterial activity against the Gram-positive bacterium M.luteus with an IC(90) of 125ug/ml. Has weak antibacterial activity against the Gram-negative bacterium A.hydrophila. This Scylla serrata (Mud crab) protein is Scygonadin.